A 1274-amino-acid polypeptide reads, in one-letter code: RNA-directed RNA polymerase VP2 (1274 aa).

One can recognise a RdRp catalytic domain in the interval 561–798 (LSTTSGSVVT…KLYALMGCRI (238 aa)).

The protein belongs to the reoviridae RNA-directed RNA polymerase family.

It is found in the virion. It catalyses the reaction RNA(n) + a ribonucleoside 5'-triphosphate = RNA(n+1) + diphosphate. Its function is as follows. RNA-directed RNA polymerase that is involved in transcription and genome replication. Following infection, it catalyzes the synthesis of fully conservative plus strands. After core assembly, which consists in recruitment of one capped plus-strand for each genomic segments and polymerase complexes, the polymerase switches mode and catalyzes the synthesis of complementary minus-strands. The polypeptide is RNA-directed RNA polymerase VP2 (S2) (Aquareovirus C (isolate Golden shiner/USA/GSRV/1977) (AQRV-C)).